The sequence spans 187 residues: MNETQIQRETRQVVEDVLEKTNLKQGALFVLGLSSSEVLGGQIGKESSQEIGELIVETILGILGSRGIHLAVQGCEHVNRALVVERQVAEQFGLEIVSVHPTLHAGGSGQLAAFKFMQDPVEVEFIKAHAGLDIGDTAIGMHVKHVQVPIRPILREIGHAHVTALTSRPKLIGGARAHYPQDAIRKF.

It belongs to the UPF0340 family.

This chain is UPF0340 protein SPD_0576, found in Streptococcus pneumoniae serotype 2 (strain D39 / NCTC 7466).